Reading from the N-terminus, the 387-residue chain is Succinyl-diaminopimelate desuccinylase (387 aa).

Zn(2+) is bound at residue His-74. Asp-76 is an active-site residue. Asp-107 is a Zn(2+) binding site. Glu-142 functions as the Proton acceptor in the catalytic mechanism. 3 residues coordinate Zn(2+): Glu-143, Glu-171, and His-360.

The protein belongs to the peptidase M20A family. DapE subfamily. As to quaternary structure, homodimer. Zn(2+) is required as a cofactor. It depends on Co(2+) as a cofactor.

It carries out the reaction N-succinyl-(2S,6S)-2,6-diaminopimelate + H2O = (2S,6S)-2,6-diaminopimelate + succinate. It functions in the pathway amino-acid biosynthesis; L-lysine biosynthesis via DAP pathway; LL-2,6-diaminopimelate from (S)-tetrahydrodipicolinate (succinylase route): step 3/3. Functionally, catalyzes the hydrolysis of N-succinyl-L,L-diaminopimelic acid (SDAP), forming succinate and LL-2,6-diaminopimelate (DAP), an intermediate involved in the bacterial biosynthesis of lysine and meso-diaminopimelic acid, an essential component of bacterial cell walls. The polypeptide is Succinyl-diaminopimelate desuccinylase (Rhodopseudomonas palustris (strain BisA53)).